A 345-amino-acid polypeptide reads, in one-letter code: uncharacterized protein (345 aa).

The protein resides in the plastid. It localises to the chloroplast. This is an uncharacterized protein from Chlamydomonas moewusii (Chlamydomonas eugametos).